Here is a 157-residue protein sequence, read N- to C-terminus: Putative pre-16S rRNA nuclease (157 aa).

This sequence belongs to the YqgF nuclease family.

The protein resides in the cytoplasm. Could be a nuclease involved in processing of the 5'-end of pre-16S rRNA. The chain is Putative pre-16S rRNA nuclease from Ruegeria sp. (strain TM1040) (Silicibacter sp.).